The sequence spans 156 residues: Large ribosomal subunit protein eL24 (156 aa).

Basic and acidic residues predominate over residues 110-129 (KESKAKKQETQAAKKAEKAK). Residues 110-156 (KESKAKKQETQAAKKAEKAKNAANPKARVTSKQGAKGAPVKVAAKSR) form a disordered region. Over residues 130-156 (NAANPKARVTSKQGAKGAPVKVAAKSR) the composition is skewed to low complexity.

It belongs to the eukaryotic ribosomal protein eL24 family. In terms of assembly, component of the large ribosomal subunit (LSU). Mature N.crassa ribosomes consist of a small (40S) and a large (60S) subunit. The 40S small subunit contains 1 molecule of ribosomal RNA (18S rRNA) and at least 32 different proteins. The large 60S subunit contains 3 rRNA molecules (26S, 5.8S and 5S rRNA) and at least 42 different proteins.

Its subcellular location is the cytoplasm. Its function is as follows. Component of the ribosome, a large ribonucleoprotein complex responsible for the synthesis of proteins in the cell. The small ribosomal subunit (SSU) binds messenger RNAs (mRNAs) and translates the encoded message by selecting cognate aminoacyl-transfer RNA (tRNA) molecules. The large subunit (LSU) contains the ribosomal catalytic site termed the peptidyl transferase center (PTC), which catalyzes the formation of peptide bonds, thereby polymerizing the amino acids delivered by tRNAs into a polypeptide chain. The nascent polypeptides leave the ribosome through a tunnel in the LSU and interact with protein factors that function in enzymatic processing, targeting, and the membrane insertion of nascent chains at the exit of the ribosomal tunnel. The protein is Large ribosomal subunit protein eL24 (rpl-24) of Neurospora crassa (strain ATCC 24698 / 74-OR23-1A / CBS 708.71 / DSM 1257 / FGSC 987).